A 147-amino-acid polypeptide reads, in one-letter code: uncharacterized protein (147 aa).

A helical membrane pass occupies residues 69–89 (IFFFLSLYLSSIKIPMLILNI).

It is found in the membrane. This is an uncharacterized protein from Saccharomyces cerevisiae (strain ATCC 204508 / S288c) (Baker's yeast).